The following is a 178-amino-acid chain: Beta-lactoglobulin-1A/1C (178 aa).

Residues 1–18 (MRCLLLTLGLALLCGVQA) form the signal peptide. Cystine bridges form between cysteine 84-cysteine 176 and cysteine 124-cysteine 137.

The protein belongs to the calycin superfamily. Lipocalin family. Under physiological conditions beta-lactoglobulin exists as an equilibrium mixture of monomeric and dimeric forms.

The protein localises to the secreted. Its function is as follows. Lactoglobulin is the primary component of whey, it binds retinol and is probably involved in the transport of that molecule. This is Beta-lactoglobulin-1A/1C from Sus scrofa (Pig).